The following is a 74-amino-acid chain: Protein DELETION OF SUV3 SUPPRESSOR 1(I) (74 aa).

A disordered region spans residues 35-74 (EKEEVKEVSQQWEDDWDDDDVNDDFSRQLRKELENGTDKK). The span at 46–57 (WEDDWDDDDVND) shows a compositional bias: acidic residues. The segment covering 58 to 74 (DFSRQLRKELENGTDKK) has biased composition (basic and acidic residues).

Belongs to the DSS1/SEM1 family. As to quaternary structure, part of the 26S proteasome. Interacts with BRCA2A and BRCA2B. Interacts with UCH1 and UCH2. Can form a tripartite complex with both RAD51 and BRCA2B or both DMC1 and BRCA2B.

In terms of biological role, subunit of the 26S proteasome which plays a role in ubiquitin-dependent proteolysis. The protein is Protein DELETION OF SUV3 SUPPRESSOR 1(I) of Arabidopsis thaliana (Mouse-ear cress).